The chain runs to 200 residues: Probable nicotinate-nucleotide adenylyltransferase (200 aa).

This sequence belongs to the NadD family.

It carries out the reaction nicotinate beta-D-ribonucleotide + ATP + H(+) = deamido-NAD(+) + diphosphate. It functions in the pathway cofactor biosynthesis; NAD(+) biosynthesis; deamido-NAD(+) from nicotinate D-ribonucleotide: step 1/1. Its function is as follows. Catalyzes the reversible adenylation of nicotinate mononucleotide (NaMN) to nicotinic acid adenine dinucleotide (NaAD). In Clostridium tetani (strain Massachusetts / E88), this protein is Probable nicotinate-nucleotide adenylyltransferase.